The chain runs to 257 residues: Putative hydro-lyase Bphy_2364 (257 aa).

Belongs to the D-glutamate cyclase family.

The chain is Putative hydro-lyase Bphy_2364 from Paraburkholderia phymatum (strain DSM 17167 / CIP 108236 / LMG 21445 / STM815) (Burkholderia phymatum).